Consider the following 729-residue polypeptide: Alpha-galactosidase AgaA (729 aa).

Substrate-binding positions include aspartate 53, tryptophan 199, 366-367, arginine 443, 476-480, cysteine 526, and aspartate 548; these read DD and KWDMN. Aspartate 478 (nucleophile) is an active-site residue. The Proton donor role is filled by aspartate 548.

The protein belongs to the glycosyl hydrolase 36 family. As to quaternary structure, homotetramer.

It catalyses the reaction Hydrolysis of terminal, non-reducing alpha-D-galactose residues in alpha-D-galactosides, including galactose oligosaccharides, galactomannans and galactolipids.. Not inhibited by D-galactose or sucrose. Inhibited by pharmaceutical drug 1-deoxygalactonojirimycin. In terms of biological role, hydrolyzes the short-chain alpha-galactosaccharides raffinose and stachyose. The polypeptide is Alpha-galactosidase AgaA (Geobacillus stearothermophilus (Bacillus stearothermophilus)).